Reading from the N-terminus, the 289-residue chain is ATP synthase gamma chain (289 aa).

It belongs to the ATPase gamma chain family. In terms of assembly, F-type ATPases have 2 components, CF(1) - the catalytic core - and CF(0) - the membrane proton channel. CF(1) has five subunits: alpha(3), beta(3), gamma(1), delta(1), epsilon(1). CF(0) has three main subunits: a, b and c.

The protein localises to the cell inner membrane. Functionally, produces ATP from ADP in the presence of a proton gradient across the membrane. The gamma chain is believed to be important in regulating ATPase activity and the flow of protons through the CF(0) complex. The protein is ATP synthase gamma chain of Actinobacillus succinogenes (strain ATCC 55618 / DSM 22257 / CCUG 43843 / 130Z).